Consider the following 472-residue polypeptide: Eukaryotic translation initiation factor 2 subunit 3 (472 aa).

Position 2 is an N-acetylalanine; partial (alanine 2). The tr-type G domain maps to 39–247; that stretch reads QATINIGTIG…YIVKKIPVPL (209 aa). The G1 stretch occupies residues 48–55; it reads GHVAHGKS. 51–56 provides a ligand contact to GTP; the sequence is AHGKST. Residues 76 to 80 are G2; that stretch reads NITIK. The interval 134–137 is G3; it reads DCPG. Residues 190–193 and 225–227 contribute to the GTP site; these read NKID and SAQ. Residues 190–193 are G4; it reads NKID. Positions 225–227 are G5; that stretch reads SAQ. An interacts with CDC123 region spans residues 457 to 469; that stretch reads GQIRRGVTIKPTV.

The protein belongs to the TRAFAC class translation factor GTPase superfamily. Classic translation factor GTPase family. EIF2G subfamily. In terms of assembly, eukaryotic translation initiation factor 2 eIF2 is a heterotrimeric complex composed of an alpha (EIF2S1), a beta (EIF2S2) and a gamma (EIF2S3) chain. eIF2 is member of the 43S pre-initiation complex (43S PIC).

The protein localises to the cytoplasm. The protein resides in the cytosol. The enzyme catalyses GTP + H2O = GDP + phosphate + H(+). In terms of biological role, member of the eIF2 complex that functions in the early steps of protein synthesis by forming a ternary complex with GTP and initiator tRNA. This complex binds to a 40S ribosomal subunit, followed by mRNA binding to form the 43S pre-initiation complex (43S PIC). Junction of the 60S ribosomal subunit to form the 80S initiation complex is preceded by hydrolysis of the GTP bound to eIF2 and release of an eIF2-GDP binary complex. In order for eIF2 to recycle and catalyze another round of initiation, the GDP bound to eIF2 must exchange with GTP by way of a reaction catalyzed by eIF-2B. The sequence is that of Eukaryotic translation initiation factor 2 subunit 3 (EIF2S3) from Gallus gallus (Chicken).